The sequence spans 91 residues: MVRWTLWDTLAFLLLLSLLLPSLLIMFIPSTFKRPVSSWKALNLRKTLLMASSVRLKPLNCSRLPCVYAQETLTFLLTQKKTCVKNYVQKE.

Residues 1–8 (MVRWTLWD) are Periplasmic-facing. Residues 9 to 29 (TLAFLLLLSLLLPSLLIMFIP) form a helical membrane-spanning segment. Over 30-91 (STFKRPVSSW…TCVKNYVQKE (62 aa)) the chain is Cytoplasmic.

Belongs to the microvirus E protein family. Oligomerizes. Interacts (via N-terminal) with host SlyD; this interaction protects E from proteolysis and stabilizes the YES complex. Interacts (via transmembrane region) with host MraY; this interaction inhibits MraY by blocking lipid access to the active site. Part of the YES complex composed of 2 host Mray molecules, 2 lysis protein E molecules and 2 host SlyD molecules.

The protein localises to the host cell membrane. In terms of biological role, induces host cell lysis. Inhibits the host translocase MraY activity that catalyzes the synthesis of lipid I, a necessary step for the host cell wall biosynthesis. This is Lysis protein E (E) from Enterobacteria phage phiX174 (Isolate Sanger).